Consider the following 934-residue polypeptide: Serine/threonine-protein kinase PknD (934 aa).

One can recognise a Protein kinase domain in the interval 4–296 (YELIRLIGKG…ELRQALQPYL (293 aa)). ATP-binding positions include 10-18 (IGKGGMGEV) and K33. D138 (proton acceptor) is an active-site residue.

The protein belongs to the protein kinase superfamily. Ser/Thr protein kinase family. Post-translationally, autophosphorylated on serine and threonine residues.

The catalysed reaction is L-seryl-[protein] + ATP = O-phospho-L-seryl-[protein] + ADP + H(+). It carries out the reaction L-threonyl-[protein] + ATP = O-phospho-L-threonyl-[protein] + ADP + H(+). Its function is as follows. Together with the serine/threonine kinase Pkn1, may play a role in the specific interactions with host proteins during intracellular growth. In Chlamydia trachomatis serovar A (strain ATCC VR-571B / DSM 19440 / HAR-13), this protein is Serine/threonine-protein kinase PknD.